Here is a 170-residue protein sequence, read N- to C-terminus: MKTLFLGVTLGLAAALSFTLEEEDITGTWYVKAMVVDKDFPEDRRPRKVSPVKVTALGGGKLEATFTFMREDRCIQKKILMRKTEEPGKYSAYGGRKLMYLQELPRRDHYIFYCKDQHHGGLLHMGKLVGRNSDTNREALEEFKKLVQRKGLSEEDIFTPLQTGSCVPEH.

The N-terminal stretch at 1-15 (MKTLFLGVTLGLAAA) is a signal peptide. An intrachain disulfide couples Cys74 to Cys166.

Belongs to the calycin superfamily. Lipocalin family. Strongly expressed in genital sphere organs such as the prostate and mammary glands.

The protein resides in the secreted. Its function is as follows. Probably binds and transports small hydrophobic volatile molecules. This is Odorant-binding protein 2b (OBP2B) from Homo sapiens (Human).